Consider the following 690-residue polypeptide: Methionine--tRNA ligase (690 aa).

Positions 12 to 22 match the 'HIGH' region motif; sequence PYANGSIHLGH. 4 residues coordinate Zn(2+): C143, C146, C156, and C159. Residues 328 to 332 carry the 'KMSKS' region motif; sequence KMSKS. Residue K331 participates in ATP binding. One can recognise a tRNA-binding domain in the interval 582-690; it reads DFAKVDLRIA…SGAEPGMKVK (109 aa).

This sequence belongs to the class-I aminoacyl-tRNA synthetase family. MetG type 1 subfamily. Homodimer. Zn(2+) serves as cofactor.

It localises to the cytoplasm. The enzyme catalyses tRNA(Met) + L-methionine + ATP = L-methionyl-tRNA(Met) + AMP + diphosphate. Its function is as follows. Is required not only for elongation of protein synthesis but also for the initiation of all mRNA translation through initiator tRNA(fMet) aminoacylation. This is Methionine--tRNA ligase from Thiobacillus denitrificans (strain ATCC 25259 / T1).